The primary structure comprises 103 residues: Large ribosomal subunit protein bL21 (103 aa).

Belongs to the bacterial ribosomal protein bL21 family. Part of the 50S ribosomal subunit. Contacts protein L20.

Functionally, this protein binds to 23S rRNA in the presence of protein L20. This Wigglesworthia glossinidia brevipalpis protein is Large ribosomal subunit protein bL21.